The following is a 146-amino-acid chain: Holo-[acyl-carrier-protein] synthase (146 aa).

2 residues coordinate Mg(2+): D9 and E63.

It belongs to the P-Pant transferase superfamily. AcpS family. Mg(2+) is required as a cofactor.

Its subcellular location is the cytoplasm. The enzyme catalyses apo-[ACP] + CoA = holo-[ACP] + adenosine 3',5'-bisphosphate + H(+). Functionally, transfers the 4'-phosphopantetheine moiety from coenzyme A to a Ser of acyl-carrier-protein. The chain is Holo-[acyl-carrier-protein] synthase from Burkholderia ambifaria (strain MC40-6).